Reading from the N-terminus, the 421-residue chain is Imidazolonepropionase (421 aa).

Residues histidine 81 and histidine 83 each contribute to the Fe(3+) site. Histidine 81 and histidine 83 together coordinate Zn(2+). 4-imidazolone-5-propanoate-binding residues include arginine 90, tyrosine 153, and histidine 186. Residue tyrosine 153 participates in N-formimidoyl-L-glutamate binding. Histidine 251 is a binding site for Fe(3+). A Zn(2+)-binding site is contributed by histidine 251. Glutamate 254 provides a ligand contact to 4-imidazolone-5-propanoate. Residue aspartate 326 coordinates Fe(3+). Residue aspartate 326 participates in Zn(2+) binding. N-formimidoyl-L-glutamate-binding residues include asparagine 328 and glycine 330. Serine 331 contributes to the 4-imidazolone-5-propanoate binding site.

It belongs to the metallo-dependent hydrolases superfamily. HutI family. Zn(2+) is required as a cofactor. It depends on Fe(3+) as a cofactor.

Its subcellular location is the cytoplasm. It catalyses the reaction 4-imidazolone-5-propanoate + H2O = N-formimidoyl-L-glutamate. It functions in the pathway amino-acid degradation; L-histidine degradation into L-glutamate; N-formimidoyl-L-glutamate from L-histidine: step 3/3. Its function is as follows. Catalyzes the hydrolytic cleavage of the carbon-nitrogen bond in imidazolone-5-propanoate to yield N-formimidoyl-L-glutamate. It is the third step in the universal histidine degradation pathway. The sequence is that of Imidazolonepropionase from Streptococcus pyogenes serotype M12 (strain MGAS2096).